A 224-amino-acid polypeptide reads, in one-letter code: Deoxyribose-phosphate aldolase (224 aa).

Catalysis depends on Asp92, which acts as the Proton donor/acceptor. Residue Lys154 is the Schiff-base intermediate with acetaldehyde of the active site. Lys183 functions as the Proton donor/acceptor in the catalytic mechanism.

The protein belongs to the DeoC/FbaB aldolase family. DeoC type 1 subfamily.

The protein resides in the cytoplasm. The catalysed reaction is 2-deoxy-D-ribose 5-phosphate = D-glyceraldehyde 3-phosphate + acetaldehyde. Its pathway is carbohydrate degradation; 2-deoxy-D-ribose 1-phosphate degradation; D-glyceraldehyde 3-phosphate and acetaldehyde from 2-deoxy-alpha-D-ribose 1-phosphate: step 2/2. In terms of biological role, catalyzes a reversible aldol reaction between acetaldehyde and D-glyceraldehyde 3-phosphate to generate 2-deoxy-D-ribose 5-phosphate. This Actinobacillus succinogenes (strain ATCC 55618 / DSM 22257 / CCUG 43843 / 130Z) protein is Deoxyribose-phosphate aldolase.